A 496-amino-acid chain; its full sequence is MPIFSTRVLTYLRCIFRLFIGLMLLLTLVGCDFYTPSSQLEQIRQRGEIRVGTIYGSTSYYQRDDLAQGFDYELAKSYADWLGVKLTIVPVYSIAELVELLEKGKLDLAAAAIVVTPERRALFRFGPGFYQVSPKLVYRYGSPKPKDIGDLKGSIVVPAGSTGEDLLRELAKEYPGLKWSTNRDADVEELLKQVADGKIDYTVVQDTVLARTQRYYPELTEGLTLSKNQTVAWAMTKLPDDSLYASIIDFFGQRFMDGAIAKLDEKYFGHVQNFDFVDTRTFLQRAKSLLPKYQDLFKTHARMVDWRLLAAISYQESHWDPQARSYTGVRGMMMLTEPTAKAMGVKDRTHPAESIEGGARYLQHMMEKVPASVPTDEKVWFALTAYNIGYGHMMDARRLTKELGKNPDAWSDVKEVLPLLQQARWHRKVRYGYARGGEARNYVNNVRQYYQSLLWLDNEQQKAHRREELDEDDSSEPQSTERPTVIAEVVKQITLR.

The first 31 residues, 1–31 (MPIFSTRVLTYLRCIFRLFIGLMLLLTLVGC), serve as a signal peptide directing secretion. The tract at residues 32–271 (DFYTPSSQLE…KLDEKYFGHV (240 aa)) is non-LT domain. The segment at 273 to 496 (NFDFVDTRTF…AEVVKQITLR (224 aa)) is LT domain. The active site involves E316. The interval 464–485 (HRREELDEDDSSEPQSTERPTV) is disordered.

It in the N-terminal section; belongs to the bacterial solute-binding protein 3 family. In the C-terminal section; belongs to the transglycosylase Slt family.

Its subcellular location is the cell outer membrane. The enzyme catalyses Exolytic cleavage of the (1-&gt;4)-beta-glycosidic linkage between N-acetylmuramic acid (MurNAc) and N-acetylglucosamine (GlcNAc) residues in peptidoglycan, from either the reducing or the non-reducing ends of the peptidoglycan chains, with concomitant formation of a 1,6-anhydrobond in the MurNAc residue.. Its function is as follows. Murein-degrading enzyme that degrades murein glycan strands and insoluble, high-molecular weight murein sacculi, with the concomitant formation of a 1,6-anhydromuramoyl product. Lytic transglycosylases (LTs) play an integral role in the metabolism of the peptidoglycan (PG) sacculus. Their lytic action creates space within the PG sacculus to allow for its expansion as well as for the insertion of various structures such as secretion systems and flagella. This is Membrane-bound lytic murein transglycosylase F from Aeromonas salmonicida (strain A449).